The primary structure comprises 476 residues: Glycogen synthase (476 aa).

K15 provides a ligand contact to ADP-alpha-D-glucose.

It belongs to the glycosyltransferase 1 family. Bacterial/plant glycogen synthase subfamily.

It catalyses the reaction [(1-&gt;4)-alpha-D-glucosyl](n) + ADP-alpha-D-glucose = [(1-&gt;4)-alpha-D-glucosyl](n+1) + ADP + H(+). Its pathway is glycan biosynthesis; glycogen biosynthesis. Functionally, synthesizes alpha-1,4-glucan chains using ADP-glucose. The polypeptide is Glycogen synthase (Ligilactobacillus salivarius (strain UCC118) (Lactobacillus salivarius)).